A 188-amino-acid polypeptide reads, in one-letter code: Cytochrome c oxidase assembly protein CtaG (188 aa).

The Cytoplasmic segment spans residues 1–8 (MSKKSNKN). The helical; Signal-anchor for type II membrane protein transmembrane segment at 9-31 (LAFSLLGLIISMVLLSFASVPIY) threads the bilayer. Over 32–188 (NLFCKVTGYG…SSLRGNYVSN (157 aa)) the chain is Periplasmic.

This sequence belongs to the COX11/CtaG family.

The protein localises to the cell inner membrane. Functionally, exerts its effect at some terminal stage of cytochrome c oxidase synthesis, probably by being involved in the insertion of the copper B into subunit I. The protein is Cytochrome c oxidase assembly protein CtaG of Rickettsia conorii (strain ATCC VR-613 / Malish 7).